The sequence spans 253 residues: HTH-type transcriptional regulator YdeO (253 aa).

The HTH araC/xylS-type domain maps to 137-233 (GKVRNIVNMK…GNSPKRVSKE (97 aa)). DNA-binding regions (H-T-H motif) lie at residues 154 to 175 (KDICDCLYISESLLKKKLKQEQ) and 200 to 223 (VNKIAEQCGYASTSYFIYAFRKHF).

Its function is as follows. Induces the expression of gadE. Could also regulate the expression of other genes involved in acid resistance. This Shigella flexneri protein is HTH-type transcriptional regulator YdeO (ydeO).